The sequence spans 84 residues: MLGIHVKKTKEELIISWQLAKITIPLRDVIEVTEDATYAGVEDTSAIRIGTAYGTTDRILIKTVKQNYVLFTTNKVSILNAINA.

It belongs to the UPF0457 family.

The sequence is that of UPF0457 protein BALH_2270 from Bacillus thuringiensis (strain Al Hakam).